The primary structure comprises 158 residues: Transcriptional repressor NrdR (158 aa).

The segment at 3–34 (CPYCGYPDSKVIDSRPTDDNTSIRRRRECLKC) is a zinc-finger region. The ATP-cone domain maps to 49-139 (ILVIKKDNRR…VYRQFKDINT (91 aa)).

Belongs to the NrdR family. Zn(2+) is required as a cofactor.

Functionally, negatively regulates transcription of bacterial ribonucleotide reductase nrd genes and operons by binding to NrdR-boxes. The chain is Transcriptional repressor NrdR from Thermoanaerobacter sp. (strain X514).